The following is a 417-amino-acid chain: Serine hydroxymethyltransferase (417 aa).

Residues Leu112 and 116–118 each bind (6S)-5,6,7,8-tetrahydrofolate; that span reads GHL. Lys221 bears the N6-(pyridoxal phosphate)lysine mark. Glu247 contacts (6S)-5,6,7,8-tetrahydrofolate.

Belongs to the SHMT family. Homodimer. Pyridoxal 5'-phosphate serves as cofactor.

The protein resides in the cytoplasm. The enzyme catalyses (6R)-5,10-methylene-5,6,7,8-tetrahydrofolate + glycine + H2O = (6S)-5,6,7,8-tetrahydrofolate + L-serine. It participates in one-carbon metabolism; tetrahydrofolate interconversion. It functions in the pathway amino-acid biosynthesis; glycine biosynthesis; glycine from L-serine: step 1/1. In terms of biological role, catalyzes the reversible interconversion of serine and glycine with tetrahydrofolate (THF) serving as the one-carbon carrier. This reaction serves as the major source of one-carbon groups required for the biosynthesis of purines, thymidylate, methionine, and other important biomolecules. Also exhibits THF-independent aldolase activity toward beta-hydroxyamino acids, producing glycine and aldehydes, via a retro-aldol mechanism. The polypeptide is Serine hydroxymethyltransferase (Borrelia duttonii (strain Ly)).